A 239-amino-acid polypeptide reads, in one-letter code: NADH-quinone oxidoreductase subunit I 1 (239 aa).

4Fe-4S ferredoxin-type domains lie at 81-111 (LVPR…IEAA) and 123-152 (AKFV…MDSG). Positions 91, 94, 97, 101, 132, 135, 138, and 142 each coordinate [4Fe-4S] cluster.

It belongs to the complex I 23 kDa subunit family. NDH-1 is composed of 14 different subunits. Subunits NuoA, H, J, K, L, M, N constitute the membrane sector of the complex. [4Fe-4S] cluster serves as cofactor.

The protein localises to the cell inner membrane. The catalysed reaction is a quinone + NADH + 5 H(+)(in) = a quinol + NAD(+) + 4 H(+)(out). Functionally, NDH-1 shuttles electrons from NADH, via FMN and iron-sulfur (Fe-S) centers, to quinones in the respiratory chain. The immediate electron acceptor for the enzyme in this species is believed to be ubiquinone. Couples the redox reaction to proton translocation (for every two electrons transferred, four hydrogen ions are translocated across the cytoplasmic membrane), and thus conserves the redox energy in a proton gradient. The protein is NADH-quinone oxidoreductase subunit I 1 of Anaeromyxobacter dehalogenans (strain 2CP-C).